Reading from the N-terminus, the 855-residue chain is Transcription factor gaf1 (855 aa).

The span at 72–112 (KNLTPNGDSNTLTPDTFSDPTAPSSAQSVPPTSSAETTADN) shows a compositional bias: polar residues. Disordered stretches follow at residues 72–126 (KNLT…PAYS), 149–184 (TSFD…ESQP), 229–287 (SHNL…GFPS), 412–483 (PNSN…DMFS), 602–643 (NKNA…TRTT), and 680–768 (KKRN…SQSM). Basic and acidic residues predominate over residues 149–168 (TSFDESTAKSKKRSIADSHF). Serine 150 bears the Phosphoserine mark. 2 stretches are compositionally biased toward low complexity: residues 240 to 250 (PANSNNSASPN) and 428 to 444 (NSSK…DSNQ). Residues 445–476 (ENAESFNPSISSHNSAEWASGETTGHSSNSPL) show a composition bias toward polar residues. Residues 614 to 623 (AEDKKGDANT) are compositionally biased toward basic and acidic residues. 2 stretches are compositionally biased toward low complexity: residues 625-643 (RANA…TRTT) and 707-717 (SKSSSAKSTAA). Residues 635-659 (CTNCQTRTTPLWRRSPDGQPLCNAC) form a GATA-type zinc finger. A phosphoserine mark is found at serine 727 and serine 729. Positions 755–767 (QQQSSENESKSQS) are enriched in low complexity.

Its subcellular location is the nucleus. Its function is as follows. Transcriptional activator. This is Transcription factor gaf1 (gaf1) from Schizosaccharomyces pombe (strain 972 / ATCC 24843) (Fission yeast).